The chain runs to 89 residues: Small ribosomal subunit protein uS15 (89 aa).

Residues 1–24 (MSLNAETKAGIVEKYRRDPSDTGS) are disordered. The segment covering 11-20 (IVEKYRRDPS) has biased composition (basic and acidic residues).

This sequence belongs to the universal ribosomal protein uS15 family. In terms of assembly, part of the 30S ribosomal subunit. Forms a bridge to the 50S subunit in the 70S ribosome, contacting the 23S rRNA.

One of the primary rRNA binding proteins, it binds directly to 16S rRNA where it helps nucleate assembly of the platform of the 30S subunit by binding and bridging several RNA helices of the 16S rRNA. Functionally, forms an intersubunit bridge (bridge B4) with the 23S rRNA of the 50S subunit in the ribosome. This is Small ribosomal subunit protein uS15 from Thioalkalivibrio sulfidiphilus (strain HL-EbGR7).